A 527-amino-acid polypeptide reads, in one-letter code: Probable pectinesterase/pectinesterase inhibitor 32 (527 aa).

The N-terminal stretch at 1–24 is a signal peptide; that stretch reads MAKFRQMGSSIFFLFLIIISLCSA. The interval 25–165 is pectinesterase inhibitor 32; the sequence is HKEAFSSTDL…GTTVRNLLTM (141 aa). Residues Asn110, Asn209, Asn224, and Asn280 are each glycosylated (N-linked (GlcNAc...) asparagine). Residues 214-511 form a pectinesterase 32 region; the sequence is DAVVAADGTG…FTVSQLIQGN (298 aa). Positions 289 and 319 each coordinate substrate. The active-site Proton donor; for pectinesterase activity is the Asp342. A disulfide bridge connects residues Cys356 and Cys376. Catalysis depends on Asp363, which acts as the Nucleophile; for pectinesterase activity. Residue Asn423 is glycosylated (N-linked (GlcNAc...) asparagine). The substrate site is built by Arg431 and Trp433. 2 N-linked (GlcNAc...) asparagine glycosylation sites follow: Asn494 and Asn501.

It in the N-terminal section; belongs to the PMEI family. The protein in the C-terminal section; belongs to the pectinesterase family. Expressed in siliques.

Its subcellular location is the secreted. The protein localises to the cell wall. It catalyses the reaction [(1-&gt;4)-alpha-D-galacturonosyl methyl ester](n) + n H2O = [(1-&gt;4)-alpha-D-galacturonosyl](n) + n methanol + n H(+). The protein operates within glycan metabolism; pectin degradation; 2-dehydro-3-deoxy-D-gluconate from pectin: step 1/5. In terms of biological role, acts in the modification of cell walls via demethylesterification of cell wall pectin. The polypeptide is Probable pectinesterase/pectinesterase inhibitor 32 (PME32) (Arabidopsis thaliana (Mouse-ear cress)).